Consider the following 575-residue polypeptide: Delta-1-pyrroline-5-carboxylate dehydrogenase, mitochondrial (575 aa).

297–302 (GKIQSG) contributes to the NAD(+) binding site. Residue E317 is the Proton acceptor of the active site. C351 functions as the Nucleophile in the catalytic mechanism.

This sequence belongs to the aldehyde dehydrogenase family.

It is found in the mitochondrion inner membrane. It catalyses the reaction L-glutamate 5-semialdehyde + NAD(+) + H2O = L-glutamate + NADH + 2 H(+). It functions in the pathway amino-acid degradation; L-proline degradation into L-glutamate; L-glutamate from L-proline: step 2/2. The protein is Delta-1-pyrroline-5-carboxylate dehydrogenase, mitochondrial (PUT2) of Saccharomyces cerevisiae (strain ATCC 204508 / S288c) (Baker's yeast).